The sequence spans 236 residues: 2,3,4,5-tetrahydropyridine-2,6-dicarboxylate N-acetyltransferase (236 aa).

The protein belongs to the transferase hexapeptide repeat family. DapH subfamily.

The catalysed reaction is (S)-2,3,4,5-tetrahydrodipicolinate + acetyl-CoA + H2O = L-2-acetamido-6-oxoheptanedioate + CoA. Its pathway is amino-acid biosynthesis; L-lysine biosynthesis via DAP pathway; LL-2,6-diaminopimelate from (S)-tetrahydrodipicolinate (acetylase route): step 1/3. In terms of biological role, catalyzes the transfer of an acetyl group from acetyl-CoA to tetrahydrodipicolinate. The protein is 2,3,4,5-tetrahydropyridine-2,6-dicarboxylate N-acetyltransferase of Listeria monocytogenes serotype 4b (strain CLIP80459).